The sequence spans 276 residues: Diaminopimelate epimerase (276 aa).

Asn-13, Gln-46, and Asn-66 together coordinate substrate. Catalysis depends on Cys-75, which acts as the Proton donor. Residues Gly-76–Asn-77, Asn-159, Asn-192, and Glu-210–Arg-211 each bind substrate. Residue Cys-219 is the Proton acceptor of the active site. Gly-220–Thr-221 is a binding site for substrate.

It belongs to the diaminopimelate epimerase family. As to quaternary structure, homodimer.

It localises to the cytoplasm. It carries out the reaction (2S,6S)-2,6-diaminopimelate = meso-2,6-diaminopimelate. Its pathway is amino-acid biosynthesis; L-lysine biosynthesis via DAP pathway; DL-2,6-diaminopimelate from LL-2,6-diaminopimelate: step 1/1. In terms of biological role, catalyzes the stereoinversion of LL-2,6-diaminopimelate (L,L-DAP) to meso-diaminopimelate (meso-DAP), a precursor of L-lysine and an essential component of the bacterial peptidoglycan. The polypeptide is Diaminopimelate epimerase (Teredinibacter turnerae (strain ATCC 39867 / T7901)).